The following is a 183-amino-acid chain: Acidic proline-rich protein HP43A (183 aa).

A signal peptide spans Met-1–His-14. A disordered region spans residues Ile-22–Leu-183. Acidic residues predominate over residues Ser-52–Asn-65. Repeat copies occupy residues Arg-81–Asn-100, Arg-101–Asn-120, Arg-121–Asn-140, Arg-141–Asn-160, and Arg-161–Ser-180. Low complexity predominate over residues Gly-86–Leu-183.

It localises to the secreted. The protein is Acidic proline-rich protein HP43A (H29) of Mesocricetus auratus (Golden hamster).